The primary structure comprises 217 residues: Somatotropin (217 aa).

The N-terminal stretch at 1–26 (MATGSHTTTLLLAVALLGLPWPQEAG) is a signal peptide. Histidine 46 is a binding site for Zn(2+). Residues cysteine 79 and cysteine 190 are joined by a disulfide bond. Position 199 (glutamate 199) interacts with Zn(2+). Cysteine 207 and cysteine 215 are oxidised to a cystine.

The protein belongs to the somatotropin/prolactin family.

The protein resides in the secreted. In terms of biological role, plays an important role in growth control. Its major role in stimulating body growth is to stimulate the liver and other tissues to secrete IGF1. It stimulates both the differentiation and proliferation of myoblasts. It also stimulates amino acid uptake and protein synthesis in muscle and other tissues. The chain is Somatotropin (GH1) from Galago senegalensis (Northern lesser bushbaby).